The chain runs to 264 residues: Putative serine carboxypeptidase-like 53 (264 aa).

An N-terminal signal peptide occupies residues 1–23; it reads MGKLQDWSITTCLFLFFLHASQT. 4 N-linked (GlcNAc...) asparagine glycosylation sites follow: Asn-65, Asn-101, Asn-153, and Asn-184.

This sequence belongs to the peptidase S10 family.

It localises to the secreted. This Arabidopsis thaliana (Mouse-ear cress) protein is Putative serine carboxypeptidase-like 53 (SCPL53).